The following is a 273-amino-acid chain: 1,4-dihydroxy-2-naphthoyl-CoA synthase (273 aa).

Residues arginine 34, serine 73–glutamine 77, tyrosine 85, tyrosine 117–glycine 121, threonine 143, serine 149, tyrosine 246, and lysine 261 contribute to the substrate site. Glutamine 142 to glycine 144 provides a ligand contact to hydrogencarbonate. Positions glycine 254–aspartate 265 are enriched in basic and acidic residues. Residues glycine 254 to proline 273 are disordered.

The protein belongs to the enoyl-CoA hydratase/isomerase family. MenB subfamily. Requires hydrogencarbonate as cofactor.

The enzyme catalyses 2-succinylbenzoyl-CoA + H(+) = 1,4-dihydroxy-2-naphthoyl-CoA + H2O. Its pathway is quinol/quinone metabolism; 1,4-dihydroxy-2-naphthoate biosynthesis; 1,4-dihydroxy-2-naphthoate from chorismate: step 6/7. The protein operates within quinol/quinone metabolism; menaquinone biosynthesis. In terms of biological role, converts o-succinylbenzoyl-CoA (OSB-CoA) to 1,4-dihydroxy-2-naphthoyl-CoA (DHNA-CoA). The protein is 1,4-dihydroxy-2-naphthoyl-CoA synthase of Staphylococcus aureus (strain MSSA476).